Consider the following 505-residue polypeptide: ATP synthase subunit alpha, chloroplastic (505 aa).

ATP is bound at residue 170 to 177 (GDRQTGKT).

This sequence belongs to the ATPase alpha/beta chains family. F-type ATPases have 2 components, CF(1) - the catalytic core - and CF(0) - the membrane proton channel. CF(1) has five subunits: alpha(3), beta(3), gamma(1), delta(1), epsilon(1). CF(0) has four main subunits: a, b, b' and c.

It is found in the plastid. Its subcellular location is the chloroplast thylakoid membrane. It catalyses the reaction ATP + H2O + 4 H(+)(in) = ADP + phosphate + 5 H(+)(out). In terms of biological role, produces ATP from ADP in the presence of a proton gradient across the membrane. The alpha chain is a regulatory subunit. The sequence is that of ATP synthase subunit alpha, chloroplastic from Oenothera biennis (German evening primrose).